The primary structure comprises 625 residues: Dopamine beta-hydroxylase (625 aa).

The Cytoplasmic portion of the chain corresponds to 1–9 (MQVPSPSAR). The chain crosses the membrane as a helical; Signal-anchor for type II membrane protein span at residues 10-30 (EAASMYGTAVAVFLVLLVAVL). Over 31–625 (QGLAPPESPL…TVVNIGGGKV (595 aa)) the chain is Intragranular. Positions 50 to 166 (GDLELSWDVS…GTVHLVYGVL (117 aa)) constitute a DOMON domain. 6 cysteine pairs are disulfide-bonded: cysteine 147/cysteine 604, cysteine 224/cysteine 275, cysteine 261/cysteine 287, cysteine 382/cysteine 495, cysteine 386/cysteine 573, and cysteine 458/cysteine 480. N-linked (GlcNAc...) asparagine glycosylation occurs at asparagine 177. Tyrosine 222 is an active-site residue. Residues histidine 254 and histidine 255 each coordinate Cu(2+). The N-linked (GlcNAc...) asparagine glycan is linked to asparagine 315. The Cu(2+) site is built by histidine 325, histidine 404, histidine 406, and methionine 479. Histidine 404 is an active-site residue. Asparagine 574 carries N-linked (GlcNAc...) asparagine glycosylation.

This sequence belongs to the copper type II ascorbate-dependent monooxygenase family. Homotetramer; composed of two disulfide-linked dimers. Cu(2+) is required as a cofactor. Post-translationally, proteolytic cleavage after the membrane-anchor leads to the release of the soluble form. In terms of processing, N-glycosylated.

The protein resides in the cytoplasmic vesicle. It is found in the secretory vesicle lumen. Its subcellular location is the secretory vesicle. It localises to the chromaffin granule lumen. The protein localises to the secreted. The protein resides in the secretory vesicle membrane. It is found in the chromaffin granule membrane. The enzyme catalyses dopamine + 2 L-ascorbate + O2 = (R)-noradrenaline + 2 monodehydro-L-ascorbate radical + H2O. The protein operates within catecholamine biosynthesis; (R)-noradrenaline biosynthesis; (R)-noradrenaline from dopamine: step 1/1. Its function is as follows. Catalyzes the hydroxylation of dopamine to noradrenaline (also known as norepinephrine), and is thus vital for regulation of these neurotransmitters. In Canis lupus familiaris (Dog), this protein is Dopamine beta-hydroxylase (DBH).